Here is a 712-residue protein sequence, read N- to C-terminus: MTSDEKSATRDIYDPNTLPDYDREFIEPDDLRQFEKALNAPEAAPLVALNDWRPVNQRVRKSRRTKPRRSKDETREGVLYTVLKWPFLFTVFAWITVLGFAYTLTRLYIFLYEQFVTWRGKREQLRRELSMQTNYQDWLKAAQALDTYLGNLKWKETDEYAYYDHLTINKVVAQLKQTRKAAEMEMQNGRPGLSDPPAVEELCFLLEACVKNNFAGVENPRLYSETYSGTKDLVQEYIDEVHSCIRLVLDSKQISNEDKYQFFKHLDTNFGRTALCLSGGATFAYYHFGVIRALLDNDVLPEIITGTSGGALVAALVATRTDEELKQLLVPALAHRIRACHEGFTTWVRRWWRTGARFDTLDWARQCSWFCRGSTTFREAYERTGRILNVSCVPSDPHSPTILANYLTSPDCVIWSAVLASAAVPGILNPVVLMTKKRDGTLAPYSFGHKWKDGSLRTDIPIKALNLHFNVNFTIVSQVNPHINLFFFNSRGSVGRPVTHRKGRGWRGGFLGSAIEQYIKLDMNKWLRVLRHLELLPRPLGQDWSEIWLQKFSGTITIWPKSIPSDFYHILSDPSPERLARMLHVGKQSAFPKIQFIKNRLKIENAIMQGLQQCSSGGGRVMSPILSRRRQDRAQEHADRMVERLDQSFPERQSDYKDESHYAEVSDSLSATSSRPHTPDARRSSMFEEMRRQSAVFFDDPDMYADEDAVTT.

Basic and acidic residues predominate over residues 1-13 (MTSDEKSATRDIY). The disordered stretch occupies residues 1–20 (MTSDEKSATRDIYDPNTLPD). The chain crosses the membrane as a helical span at residues 85–105 (WPFLFTVFAWITVLGFAYTLT). The PNPLA domain maps to 275-466 (LCLSGGATFA…RTDIPIKALN (192 aa)). The short motif at 306–310 (GTSGG) is the GXSXG element. Ser308 functions as the Nucleophile in the catalytic mechanism. Catalysis depends on Asp453, which acts as the Proton acceptor. Residues 628–688 (RRRQDRAQEH…PDARRSSMFE (61 aa)) form a disordered region. 2 stretches are compositionally biased toward basic and acidic residues: residues 632–646 (DRAQ…ERLD) and 652–664 (RQSD…HYAE). Over residues 667–676 (DSLSATSSRP) the composition is skewed to polar residues. A compositionally biased stretch (basic and acidic residues) spans 677-688 (HTPDARRSSMFE).

This sequence belongs to the PLPL family.

It localises to the membrane. Probable lipid hydrolase. The chain is Patatin-like phospholipase domain-containing protein AFUA_1G04970 from Aspergillus fumigatus (strain ATCC MYA-4609 / CBS 101355 / FGSC A1100 / Af293) (Neosartorya fumigata).